The chain runs to 208 residues: Uracil phosphoribosyltransferase (208 aa).

Residues Arg-78, Arg-103, and 130–138 each bind 5-phospho-alpha-D-ribose 1-diphosphate; that span reads DPMFATGGT. Uracil contacts are provided by residues Ile-193 and 198–200; that span reads GDA. 5-phospho-alpha-D-ribose 1-diphosphate is bound at residue Asp-199.

Belongs to the UPRTase family. Mg(2+) is required as a cofactor.

The enzyme catalyses UMP + diphosphate = 5-phospho-alpha-D-ribose 1-diphosphate + uracil. It participates in pyrimidine metabolism; UMP biosynthesis via salvage pathway; UMP from uracil: step 1/1. With respect to regulation, allosterically activated by GTP. Catalyzes the conversion of uracil and 5-phospho-alpha-D-ribose 1-diphosphate (PRPP) to UMP and diphosphate. This Campylobacter jejuni subsp. jejuni serotype O:2 (strain ATCC 700819 / NCTC 11168) protein is Uracil phosphoribosyltransferase.